A 411-amino-acid chain; its full sequence is Argininosuccinate lyase (411 aa).

It belongs to the lyase 1 family. Argininosuccinate lyase subfamily.

The protein localises to the cytoplasm. It carries out the reaction 2-(N(omega)-L-arginino)succinate = fumarate + L-arginine. The protein operates within amino-acid biosynthesis; L-arginine biosynthesis; L-arginine from L-ornithine and carbamoyl phosphate: step 3/3. In Legionella pneumophila (strain Paris), this protein is Argininosuccinate lyase.